Here is a 280-residue protein sequence, read N- to C-terminus: Pantothenate synthetase (280 aa).

Methionine 30–histidine 37 lines the ATP pocket. Residue histidine 37 is the Proton donor of the active site. Glutamine 61 lines the (R)-pantoate pocket. Residue glutamine 61 coordinates beta-alanine. An ATP-binding site is contributed by glycine 148 to aspartate 151. Glutamine 154 contacts (R)-pantoate. Residues valine 177 and leucine 185–arginine 188 contribute to the ATP site.

The protein belongs to the pantothenate synthetase family. Homodimer.

The protein resides in the cytoplasm. The enzyme catalyses (R)-pantoate + beta-alanine + ATP = (R)-pantothenate + AMP + diphosphate + H(+). It participates in cofactor biosynthesis; (R)-pantothenate biosynthesis; (R)-pantothenate from (R)-pantoate and beta-alanine: step 1/1. In terms of biological role, catalyzes the condensation of pantoate with beta-alanine in an ATP-dependent reaction via a pantoyl-adenylate intermediate. The chain is Pantothenate synthetase from Azobacteroides pseudotrichonymphae genomovar. CFP2.